The sequence spans 285 residues: 2-dehydro-3-deoxyphosphooctonate aldolase (285 aa).

Belongs to the KdsA family.

The protein resides in the cytoplasm. The catalysed reaction is D-arabinose 5-phosphate + phosphoenolpyruvate + H2O = 3-deoxy-alpha-D-manno-2-octulosonate-8-phosphate + phosphate. Its pathway is carbohydrate biosynthesis; 3-deoxy-D-manno-octulosonate biosynthesis; 3-deoxy-D-manno-octulosonate from D-ribulose 5-phosphate: step 2/3. It participates in bacterial outer membrane biogenesis; lipopolysaccharide biosynthesis. The sequence is that of 2-dehydro-3-deoxyphosphooctonate aldolase from Delftia acidovorans (strain DSM 14801 / SPH-1).